The chain runs to 2742 residues: Neurobeachin-like protein 2 (2742 aa).

Disordered regions lie at residues 1312–1333 (ALSP…PSES) and 1356–1434 (LERA…QQTP). Residues 1384–1394 (TPSPLDGPRPF) show a composition bias toward pro residues. Positions 1421–1433 (GDDTSNTSNPQQT) are enriched in polar residues. Position 1855 is a phosphothreonine (Thr-1855). One can recognise a BEACH-type PH domain in the interval 1903 to 2028 (EKREKLVLSA…LRNQVYSLLL (126 aa)). Residues 2041–2333 (RSPLEMLRAS…QLLKEPHPPR (293 aa)) enclose the BEACH domain. 7 WD repeats span residues 2374–2412 (LVLA…TWLP), 2436–2479 (KLLS…SLPR), 2482–2519 (LLNQ…VWRL), 2532–2570 (KPVQ…IHTV), 2577–2619 (AALR…TYSL), 2627–2662 (RLRA…ILHL), and 2670–2705 (PPLP…VGAG). Phosphoserine occurs at positions 2727 and 2730.

It belongs to the WD repeat neurobeachin family.

The protein resides in the endoplasmic reticulum. Probably involved in thrombopoiesis. Plays a role in the development or secretion of alpha-granules, that contain several growth factors important for platelet biogenesis. This is Neurobeachin-like protein 2 (Nbeal2) from Mus musculus (Mouse).